The primary structure comprises 61 residues: MLTRLSKLSALMFLLGVSACKSPPPVQSQRPEPAAWAMEKAQDLQQMLNSIITVSEVESTG.

The signal sequence occupies residues 1–28 (MLTRLSKLSALMFLLGVSACKSPPPVQS). Topologically, residues 29 to 61 (QRPEPAAWAMEKAQDLQQMLNSIITVSEVESTG) are periplasmic.

This sequence belongs to the caudovirales o-spanin family. Interacts (via C-terminus) with the spanin inner membrane subunit (via C-terminus). Part of the spanin complex which spans the entire periplasmic space. The spanin complex is composed of spanin inner membrane subunit and spanin outer membrane subunit.

It localises to the host cell outer membrane. In terms of biological role, component of the spanin complex that disrupts the host outer membrane and participates in cell lysis during virus exit. The spanin complex conducts the final step in host lysis by disrupting the outer membrane after holin and endolysin action have permeabilized the inner membrane and degraded the host peptidoglycans. Host outer membrane disruption is possibly due to local fusion between the inner and outer membrane performed by the spanin complex. This is Probable spanin, outer lipoprotein subunit (Rz1) from Salmonella typhimurium (Bacteriophage P22).